A 426-amino-acid polypeptide reads, in one-letter code: 3',5'-cyclic-nucleotide phosphodiesterase (426 aa).

The tract at residues 210-229 (DKEDAQHHSNSNSNSNNIWG) is disordered.

It belongs to the cyclic nucleotide phosphodiesterase class-II family.

It carries out the reaction a nucleoside 3',5'-cyclic phosphate + H2O = a nucleoside 5'-phosphate + H(+). The chain is 3',5'-cyclic-nucleotide phosphodiesterase (PDE1) from Candida albicans (Yeast).